The following is a 127-amino-acid chain: Large ribosomal subunit protein bL17 (127 aa).

This sequence belongs to the bacterial ribosomal protein bL17 family. In terms of assembly, part of the 50S ribosomal subunit. Contacts protein L32.

This is Large ribosomal subunit protein bL17 from Leuconostoc citreum (strain KM20).